Here is a 291-residue protein sequence, read N- to C-terminus: Probable 2-(5''-triphosphoribosyl)-3'-dephosphocoenzyme-A synthase (291 aa).

It belongs to the CitG/MdcB family.

It carries out the reaction 3'-dephospho-CoA + ATP = 2'-(5''-triphospho-alpha-D-ribosyl)-3'-dephospho-CoA + adenine. In terms of biological role, involved in the formation of 2-(5''-phosphoribosyl)-3'-dephosphocoenzyme-A, the prosthetic group of the acyl-carrier protein of the malonate decarboxylase. This is Probable 2-(5''-triphosphoribosyl)-3'-dephosphocoenzyme-A synthase from Pseudomonas syringae pv. syringae (strain B728a).